The following is a 502-amino-acid chain: GTPase Obg (502 aa).

Residues N2–M159 form the Obg domain. The OBG-type G domain maps to A160–Q341. GTP-binding positions include G166–S173, F191–Q195, D212–G215, N292–D295, and S322–V324. 2 residues coordinate Mg(2+): S173 and T193. One can recognise an OCT domain in the interval D364 to P444.

This sequence belongs to the TRAFAC class OBG-HflX-like GTPase superfamily. OBG GTPase family. In terms of assembly, monomer. It depends on Mg(2+) as a cofactor.

The protein localises to the cytoplasm. Its function is as follows. An essential GTPase which binds GTP, GDP and possibly (p)ppGpp with moderate affinity, with high nucleotide exchange rates and a fairly low GTP hydrolysis rate. Plays a role in control of the cell cycle, stress response, ribosome biogenesis and in those bacteria that undergo differentiation, in morphogenesis control. The sequence is that of GTPase Obg from Corynebacterium efficiens (strain DSM 44549 / YS-314 / AJ 12310 / JCM 11189 / NBRC 100395).